A 568-amino-acid polypeptide reads, in one-letter code: Phosphoprotein (568 aa).

Residues 1-24 (MDQDAFFFERDPEAEGEAPRKQES) are disordered. The segment covering 7–24 (FFERDPEAEGEAPRKQES) has biased composition (basic and acidic residues). The N0 binding stretch occupies residues 33 to 41 (DVVLSYKPT). Positions 45–324 (EDRSWLHGII…ANEEETSNTS (280 aa)) are disordered. 3 stretches are compositionally biased toward basic and acidic residues: residues 56 to 105 (NPKE…HARI), 132 to 144 (RNTRIDEDSPNER), and 151 to 167 (LTDEDRKMAEDSNKREE). The span at 190 to 208 (RTNNNGRSMETSSTHSTRI) shows a compositional bias: polar residues. Residues 239–253 (TRSERTQNSELHKST) show a composition bias toward basic and acidic residues. Residues 294–305 (YTMNNANNNTKS) show a composition bias toward polar residues. The tract at residues 344-411 (FELSRSASHV…SSRDLHKRFS (68 aa)) is multimerization. The stretch at 387–416 (EENRTLLKQIQEEINSSRDLHKRFSEYQKE) forms a coiled coil. Residues 412-445 (EYQKEQNSLMMANLSTLHIITDRGGKTGDPSDTT) are l protein binding. The interval 434–455 (RGGKTGDPSDTTRSPSVFTKGK) is disordered. Residues 441–450 (PSDTTRSPSV) are compositionally biased toward polar residues. Residues 479 to 568 (DLIREDELRD…FEEDIDSLTN (90 aa)) form an interaction with the nucleocapsid (N-RNA) region.

It belongs to the respirovirus P protein family. Homotetramer. Interacts (via multimerization domain) with polymerase L; this interaction forms the polymerase complex. Interacts (via N-terminus) with N0; this interaction allows P to chaperon N0 before encapsidation and form the N-P complex. Interacts (via C-terminus) with N-RNA template; this interaction positions the polymerase on the template.

Its function is as follows. Essential cofactor of the RNA polymerase L that plays a central role in the transcription and replication by forming the polymerase complex with RNA polymerase L and recruiting L to the genomic N-RNA template for RNA synthesis. Also plays a central role in the encapsidation of nascent RNA chains by forming the encapsidation complex with the nucleocapsid protein N (N-P complex). Acts as a chaperone for newly synthesized free N protein, so-called N0, allowing encapsidation of nascent RNA chains during replication. The nucleoprotein protein N prevents excessive phosphorylation of P, which leads to down-regulation of viral transcription/ replication. Participates, together with N, in the formation of viral factories (viroplasms), which are large inclusions in the host cytoplasm where replication takes place. Recruits host PI4KB and remodel the host endoplasmic reticulum membrane to form viral replication factories. The chain is Phosphoprotein (P/C) from Human parainfluenza 1 virus (strain C35) (HPIV-1).